Consider the following 152-residue polypeptide: Prostaglandin E synthase (152 aa).

Over 1–12 (MPAHSLVMSSPA) the chain is Lumenal. Residues 13 to 41 (LPAFLLCSTLLVIKMYVVAIITGQVRLRK) form a helical membrane-spanning segment. Arg-38 contacts glutathione. Residues 42 to 60 (KAFANPEDALRHGGPQYCR) are Cytoplasmic-facing. The helical transmembrane segment at 61–90 (SDPDVERCLRAHRNDMETIYPFLFLGFVYS) threads the bilayer. 73–77 (RNDME) lines the glutathione pocket. Residues 91–95 (FLGPN) are Lumenal-facing. A helical membrane pass occupies residues 96-119 (PFVAWMHFLVFLVGRVAHTVAYLG). Positions 113 and 117 each coordinate glutathione. The Cytoplasmic portion of the chain corresponds to 120 to 123 (KLRA). A helical transmembrane segment spans residues 124–152 (PIRSVTYTLAQLPCASMALQILWEAARHL). Residue 126-130 (RSVTY) coordinates glutathione.

It belongs to the MAPEG family. As to quaternary structure, homotrimer. Requires glutathione as cofactor.

The protein resides in the membrane. Its subcellular location is the cytoplasm. It localises to the perinuclear region. It catalyses the reaction prostaglandin H2 = prostaglandin E2. It carries out the reaction 2-glyceryl-prostaglandin H2 = 2-glyceryl-prostaglandin E2. The catalysed reaction is prostaglandin G2 = (15S)-15-hydroperoxy-prostaglandin E2. The enzyme catalyses 1-chloro-2,4-dinitrobenzene + glutathione = 2,4-dinitrophenyl-S-glutathione + chloride + H(+). It catalyses the reaction (5S)-hydroperoxy-(6E,8Z,11Z,14Z)-eicosatetraenoate + 2 glutathione = (5S)-hydroxy-(6E,8Z,11Z,14Z)-eicosatetraenoate + glutathione disulfide + H2O. It functions in the pathway lipid metabolism; prostaglandin biosynthesis. With respect to regulation, induced by interleukin IL1B. In terms of biological role, terminal enzyme of the cyclooxygenase (COX)-2-mediated prostaglandin E2 (PGE2) biosynthetic pathway. Catalyzes the glutathione-dependent oxidoreduction of prostaglandin endoperoxide H2 (PGH2) to prostaglandin E2 (PGE2) in response to inflammatory stimuli. Plays a key role in inflammation response, fever and pain. Also catalyzes the oxidoreduction of endocannabinoids into prostaglandin glycerol esters and PGG2 into 15-hydroperoxy-PGE2. In addition, displays low glutathione transferase and glutathione-dependent peroxidase activities, toward 1-chloro-2,4-dinitrobenzene and 5-hydroperoxyicosatetraenoic acid (5-HPETE), respectively. This Homo sapiens (Human) protein is Prostaglandin E synthase (PTGES).